We begin with the raw amino-acid sequence, 28 residues long: Putative fruR/shl operon leader peptide (28 aa).

The polypeptide is Putative fruR/shl operon leader peptide (fruL) (Escherichia coli O6:H1 (strain CFT073 / ATCC 700928 / UPEC)).